An 835-amino-acid polypeptide reads, in one-letter code: Pre-mRNA-splicing factor SYF1 (835 aa).

HAT repeat units lie at residues 7–38, 46–77, 313–348, 414–456, 458–494, 517–551, 589–623, 628–664, 707–741, and 743–777; these read YILDDSDIAFEYELQKSPSVEVWQRYIAHWEA, RSARHILWLYERMVTQFPTLTVWEQYIGWFRR, ADFDKMEKVLTKALSETVKTNEFIAIYTYHVNFEQA, EDFD…VYWS, KSYEEARTIYESATKVPFPDLQDLEIVWHTWAVNEFQ, SIIDRFKSENRRLPSQTILFTSKRLWNYYIDLLES, NNLHGSLQVYEKGINMFPPEICYELWTLLLDEVME, ATKERIRELFEQCLQQLGNTDININSIYVKYSDFEIH, LGPDSLRQLLSECIQELPNSKAITYVLKFTKLEMS, and SDYTRARELLQYGAQLLPPIKNEELWGLWEQFELE.

Belongs to the crooked-neck family. In terms of assembly, associated with the spliceosome.

It is found in the nucleus. In terms of biological role, involved in pre-mRNA splicing and cell cycle progression. This chain is Pre-mRNA-splicing factor SYF1 (SYF1), found in Candida glabrata (strain ATCC 2001 / BCRC 20586 / JCM 3761 / NBRC 0622 / NRRL Y-65 / CBS 138) (Yeast).